A 419-amino-acid chain; its full sequence is Oligouridylate-binding protein 1B (419 aa).

2 consecutive RRM domains span residues 54 to 128 (RSVY…WAYA) and 139 to 217 (FNIF…WATK). A disordered region spans residues 217 to 257 (KGATSGEDKQSSDSKSVVELTSGVSEDGKDTTNGEAPENNA). Position 241 is a phosphoserine (S241). The region spanning 260–335 (TTVYVGNLAP…RQMKCSWGSK (76 aa)) is the RRM 3 domain.

As to quaternary structure, interacts with UBA1A and UBA2A.

Its subcellular location is the nucleus. Functionally, heterogeneous nuclear ribonucleoprotein (hnRNP)-like protein that acts as a component of the pre-mRNA processing machinery. Functions to facilitate the nuclear maturation of plant pre-mRNAs. This chain is Oligouridylate-binding protein 1B (UBP1B), found in Arabidopsis thaliana (Mouse-ear cress).